The primary structure comprises 200 residues: Probable GTP-binding protein EngB (200 aa).

The EngB-type G domain occupies 23–197 (KNSEVVFIGR…RERVLKDVLG (175 aa)). Residues 31–38 (GRSNVGKS), 58–62 (GKTQL), 83–86 (DLPG), 153–156 (TKMD), and 175–177 (FTA) contribute to the GTP site. Mg(2+)-binding residues include Ser38 and Thr60.

This sequence belongs to the TRAFAC class TrmE-Era-EngA-EngB-Septin-like GTPase superfamily. EngB GTPase family. Mg(2+) is required as a cofactor.

Functionally, necessary for normal cell division and for the maintenance of normal septation. The sequence is that of Probable GTP-binding protein EngB from Wolinella succinogenes (strain ATCC 29543 / DSM 1740 / CCUG 13145 / JCM 31913 / LMG 7466 / NCTC 11488 / FDC 602W) (Vibrio succinogenes).